Reading from the N-terminus, the 867-residue chain is Protein argonaute-3 (867 aa).

The segment at 1-83 is necessary and sufficient for interaction with krimp; that stretch reads MSGRGNLLSL…IDTLKTDDHT (83 aa). Positions 1–289 are interaction with papi; sequence MSGRGNLLSL…CDVSHRILCQ (289 aa). A symmetric dimethylarginine mark is found at arginine 4, arginine 68, and arginine 70. The 112-residue stretch at 291–402 folds into the PAZ domain; it reads TVLEMLVDLY…LIPELCYLTG (112 aa). Positions 566–853 constitute a Piwi domain; it reads MVVCICHNRR…LAYLIGQSIQ (288 aa).

The protein belongs to the argonaute family. Piwi subfamily. As to quaternary structure, component of the ping-pong piRNA processing (4P) complex consisting of krimp, aub and AGO3. Interacts (via N-terminus when not methylated on arginine residues) with krimp (via non-canonical tudor domain); this interaction leads to symmetrical dimethylation on AGO3 arginine residues and its subsequent dissociation from krimp. Krimp associated AGO3 is mostly free of piRNA binding and the interaction plays an important role in the loading of AGO3 with piRNAs; piRNA binding may stimulate dissociation of the two proteins. May form part of a piRNA processing complex consisting of tud, aub and AGO3. Interacts (when symmetrically dimethylated on arginine residues) with tud. Forms a complex with smg, twin, aub, nos mRNA and piRNAs that target the nos 3'-untranslated region, in early embryos. Interacts (via the N-terminal region when symmetrically methylated on arginine residues) with papi (via C-terminus); this interaction is RNA-independent and may be required for AGO3 localization to the nuage. Interacts with TER94 and tral. Symmetrically dimethylated on Arg-4, Arg-68 and Arg-70, most likely by csul/PRMT5/DART5. Methylation state probably functions as an indicator of its piRNA binding state. In ovary, expressed in germline stem cells, germline cyst cells, nurse cells and oocytes during early stages. Also found in the somatic cap cells of the germarium. In testis, expressed in germline stem cells, primary gonial cells and early spermatocytes. No expression detected in the somatic hub cells at the apical tip of the testis (at protein level). Expressed in neurons throughout the adult brain and in the mushroom body subdivision in the peduncle. In the mushroom body, expressed only in gamma and core alpha-beta neurons.

It is found in the cytoplasm. The protein localises to the perinuclear region. Its subcellular location is the cytoplasmic ribonucleoprotein granule. Component of the perinuclear meiotic nuage, a germline-specific subcellular membraneless ribonucleoprotein compartment involved in production of transposable element-repressing Piwi-interacting RNA (piRNA)-induced silencing complexes (piRISCs), which are essential for maintaining germline integrity during oogenesis. Acts via the Piwi-interacting RNA (piRNA) metabolic process, which mediates the repression of transposable elements during meiosis by forming complexes composed of piRNAs and Piwi proteins and governs the methylation and subsequent repression of transposons. Piwi protein that directly binds piRNAs, a class of 24 to 30 nucleotide RNAs that are generated by a Dicer-independent mechanism and are primarily derived from transposons and other repeated sequence elements. Associates predominantly with sense piRNAs that contain adenine at nucleotide 10, but shows no preference for uridine at the 5' end. Shows RNA cleavage or slicer activity. Together with Piwi protein aub recruited to subregions of the perinuclear nuage by krimp, which coordinates their activity in the ping-pong amplification step of secondary piRNA biogenesis. Krimp recruits piRNA bound aub and unbound AGO3, bringing them into close proximity to facilitate the loading onto AGO3 of freshly cut piRNAs generated by aub cleavage of target sequences; krimp recognizes the piRNA loading state of the Piwi proteins via symmetrically dimethylated arginine modification in their N-terminus. Important for asymmetric ping-pong amplification to bias production towards antisense piRNAs capable of silencing transposable elements. In testis, associates with Su(Ste) and AT-chX-1 piRNAs mostly produced from antisense precursors. In the germline, acts to amplify pools of antisense piRNAs, among others Su(Ste), AT-chX-1 and roo, and to limit sense piRNA accumulation. Forms a complex with smg, twin, aub and specific piRNAs that targets nos mRNA (and probably other maternal mRNAS) for deadenylation promoting its decay during early embryogenesis. Involved in transposon silencing in the adult brain. The chain is Protein argonaute-3 from Drosophila melanogaster (Fruit fly).